The sequence spans 468 residues: Glutamate--tRNA ligase (468 aa).

The short motif at 10–20 is the 'HIGH' region element; the sequence is PSPTGYLHIGG. A 'KMSKS' region motif is present at residues 252–256; that stretch reads KLSKR. Residue Lys255 coordinates ATP.

It belongs to the class-I aminoacyl-tRNA synthetase family. Glutamate--tRNA ligase type 1 subfamily. As to quaternary structure, monomer.

The protein localises to the cytoplasm. The enzyme catalyses tRNA(Glu) + L-glutamate + ATP = L-glutamyl-tRNA(Glu) + AMP + diphosphate. Catalyzes the attachment of glutamate to tRNA(Glu) in a two-step reaction: glutamate is first activated by ATP to form Glu-AMP and then transferred to the acceptor end of tRNA(Glu). This is Glutamate--tRNA ligase from Mycoplasmopsis pulmonis (strain UAB CTIP) (Mycoplasma pulmonis).